A 292-amino-acid polypeptide reads, in one-letter code: 4-hydroxy-tetrahydrodipicolinate synthase (292 aa).

Residue Thr45 coordinates pyruvate. Tyr133 serves as the catalytic Proton donor/acceptor. The active-site Schiff-base intermediate with substrate is Lys161. Ile203 lines the pyruvate pocket.

The protein belongs to the DapA family. In terms of assembly, homodimer.

Its subcellular location is the cytoplasm. It carries out the reaction L-aspartate 4-semialdehyde + pyruvate = (2S,4S)-4-hydroxy-2,3,4,5-tetrahydrodipicolinate + H2O + H(+). The protein operates within amino-acid biosynthesis; L-lysine biosynthesis via DAP pathway; (S)-tetrahydrodipicolinate from L-aspartate: step 3/4. Functionally, catalyzes the condensation of (S)-aspartate-beta-semialdehyde [(S)-ASA] and pyruvate to 4-hydroxy-tetrahydrodipicolinate (HTPA). The chain is 4-hydroxy-tetrahydrodipicolinate synthase from Stutzerimonas stutzeri (strain A1501) (Pseudomonas stutzeri).